We begin with the raw amino-acid sequence, 158 residues long: Phosphopantetheine adenylyltransferase (158 aa).

Ser8 contacts substrate. ATP is bound by residues 8–9 (SF) and His16. Substrate-binding residues include Lys40, Thr72, and Arg86. Residues 87-89 (GLR), Glu97, and 122-128 (HSFLSSS) contribute to the ATP site.

It belongs to the bacterial CoaD family. Homohexamer. The cofactor is Mg(2+).

The protein localises to the cytoplasm. The catalysed reaction is (R)-4'-phosphopantetheine + ATP + H(+) = 3'-dephospho-CoA + diphosphate. It functions in the pathway cofactor biosynthesis; coenzyme A biosynthesis; CoA from (R)-pantothenate: step 4/5. Its function is as follows. Reversibly transfers an adenylyl group from ATP to 4'-phosphopantetheine, yielding dephospho-CoA (dPCoA) and pyrophosphate. In Prochlorococcus marinus (strain NATL2A), this protein is Phosphopantetheine adenylyltransferase.